The sequence spans 1097 residues: uncharacterized protein (1097 aa).

A coiled-coil region spans residues 31–1087 (LLNVARQEEE…TALNKLRTRH (1057 aa)).

Belongs to the TRAFAC class myosin-kinesin ATPase superfamily. Myosin family. Specifically expressed in muscles of the head including temporalis and tensor veli palatini.

In terms of biological role, has most probably lost the function in masticatory muscles contraction suspected for its homologs in dog (AC F1PT61) and apes. This is an uncharacterized protein from Homo sapiens (Human).